A 1143-amino-acid chain; its full sequence is Condensin-2 complex subunit G2 (1143 aa).

Phosphoserine is present on serine 30. The stretch at 460 to 498 (LLPALRYSLHDNSEKVRVAFVDMLLKIKAVRAAKFWKIC) is one HEAT repeat. Residues threonine 805 and threonine 1119 each carry the phosphothreonine modification.

As to quaternary structure, component of the condensin-2 complex, which contains the SMC2 and SMC4 heterodimer, and 3 non SMC subunits that probably regulate the complex: NCAPH2, NCAPD3 and NCAPG2.

The protein localises to the nucleus. In terms of biological role, regulatory subunit of the condensin-2 complex, a complex which establishes mitotic chromosome architecture and is involved in physical rigidity of the chromatid axis. The chain is Condensin-2 complex subunit G2 (NCAPG2) from Homo sapiens (Human).